We begin with the raw amino-acid sequence, 215 residues long: 3-isopropylmalate dehydratase small subunit (215 aa).

This sequence belongs to the LeuD family. LeuD type 1 subfamily. Heterodimer of LeuC and LeuD.

It catalyses the reaction (2R,3S)-3-isopropylmalate = (2S)-2-isopropylmalate. It functions in the pathway amino-acid biosynthesis; L-leucine biosynthesis; L-leucine from 3-methyl-2-oxobutanoate: step 2/4. Catalyzes the isomerization between 2-isopropylmalate and 3-isopropylmalate, via the formation of 2-isopropylmaleate. The sequence is that of 3-isopropylmalate dehydratase small subunit from Xylella fastidiosa (strain M12).